Here is a 331-residue protein sequence, read N- to C-terminus: Adenosine deaminase (331 aa).

2 residues coordinate Zn(2+): His-12 and His-14. 3 residues coordinate substrate: His-14, Asp-16, and Gly-170. His-197 serves as a coordination point for Zn(2+). Glu-200 (proton donor) is an active-site residue. A Zn(2+)-binding site is contributed by Asp-278. Residue Asp-279 coordinates substrate.

This sequence belongs to the metallo-dependent hydrolases superfamily. Adenosine and AMP deaminases family. Adenosine deaminase subfamily. The cofactor is Zn(2+).

The enzyme catalyses adenosine + H2O + H(+) = inosine + NH4(+). It carries out the reaction 2'-deoxyadenosine + H2O + H(+) = 2'-deoxyinosine + NH4(+). Catalyzes the hydrolytic deamination of adenosine and 2-deoxyadenosine. The protein is Adenosine deaminase of Shewanella baltica (strain OS155 / ATCC BAA-1091).